The following is a 222-amino-acid chain: UPF0758 protein TM_1557 (222 aa).

Residues 101–222 (KLDSSVKVYK…YFSFREEGEL (122 aa)) enclose the MPN domain. His171, His173, and Asp184 together coordinate Zn(2+). Positions 171–184 (HNHPSGDPTPSKED) match the JAMM motif motif.

It belongs to the UPF0758 family.

This Thermotoga maritima (strain ATCC 43589 / DSM 3109 / JCM 10099 / NBRC 100826 / MSB8) protein is UPF0758 protein TM_1557.